The chain runs to 222 residues: Small ribosomal subunit protein eS1 (222 aa).

Belongs to the eukaryotic ribosomal protein eS1 family.

In Methanocaldococcus jannaschii (strain ATCC 43067 / DSM 2661 / JAL-1 / JCM 10045 / NBRC 100440) (Methanococcus jannaschii), this protein is Small ribosomal subunit protein eS1.